The following is a 198-amino-acid chain: FMN-dependent NADH:quinone oxidoreductase (198 aa).

FMN-binding positions include Ser-10, 16–18 (SQS), 94–97 (MYNF), and 138–141 (TRGG).

The protein belongs to the azoreductase type 1 family. In terms of assembly, homodimer. The cofactor is FMN.

The catalysed reaction is 2 a quinone + NADH + H(+) = 2 a 1,4-benzosemiquinone + NAD(+). The enzyme catalyses N,N-dimethyl-1,4-phenylenediamine + anthranilate + 2 NAD(+) = 2-(4-dimethylaminophenyl)diazenylbenzoate + 2 NADH + 2 H(+). Functionally, quinone reductase that provides resistance to thiol-specific stress caused by electrophilic quinones. Also exhibits azoreductase activity. Catalyzes the reductive cleavage of the azo bond in aromatic azo compounds to the corresponding amines. This is FMN-dependent NADH:quinone oxidoreductase from Shewanella sp. (strain MR-4).